The chain runs to 377 residues: ATP-dependent (S)-NAD(P)H-hydrate dehydratase (377 aa).

In terms of domain architecture, YjeF C-terminal spans L10–L366. (6S)-NADPHX contacts are provided by residues G148 and N201 to R207. Residues K245–D249 and G264–G273 contribute to the ATP site. A (6S)-NADPHX-binding site is contributed by D274.

It belongs to the NnrD/CARKD family. It depends on Mg(2+) as a cofactor.

Its subcellular location is the cytoplasm. It catalyses the reaction (6S)-NADHX + ATP = ADP + phosphate + NADH + H(+). It carries out the reaction (6S)-NADPHX + ATP = ADP + phosphate + NADPH + H(+). Its function is as follows. Catalyzes the dehydration of the S-form of NAD(P)HX at the expense of ATP, which is converted to ADP. Together with NAD(P)HX epimerase, which catalyzes the epimerization of the S- and R-forms, the enzyme allows the repair of both epimers of NAD(P)HX, a damaged form of NAD(P)H that is a result of enzymatic or heat-dependent hydration. In Candida albicans (strain SC5314 / ATCC MYA-2876) (Yeast), this protein is ATP-dependent (S)-NAD(P)H-hydrate dehydratase.